The following is a 314-amino-acid chain: Adenosine receptor A3 (314 aa).

Topologically, residues 1–14 are extracellular; sequence MAVNGTALLLANVT. Asn4 and Asn12 each carry an N-linked (GlcNAc...) asparagine glycan. A helical transmembrane segment spans residues 15–37; that stretch reads YITVEILIGLCAIVGNVLVIWVV. At 38 to 48 the chain is on the cytoplasmic side; the sequence is KLNPSLQTTTF. Residues 49–72 form a helical membrane-spanning segment; the sequence is YFIVSLALADIAVGVLVMPLAIVI. Over 73–84 the chain is Extracellular; that stretch reads SLGITIQFYNCL. A disulfide bond links Cys83 and Cys166. Residues 85–106 form a helical membrane-spanning segment; it reads FMTCLLLIFTHASIMSLLAIAV. At 107-126 the chain is on the cytoplasmic side; the sequence is DRYLRVKLTVRYRRVTTQRR. Residues 127–148 form a helical membrane-spanning segment; that stretch reads IWLALGLCWLVSFLVGLTPMFG. The Extracellular portion of the chain corresponds to 149–177; the sequence is WNMKLTSEHQRNVTFLSCQFSSVMRMDYM. Asn160 carries N-linked (GlcNAc...) asparagine glycosylation. A helical transmembrane segment spans residues 178-198; it reads VYFSFFTWILIPLVVMCAIYL. At 199–231 the chain is on the cytoplasmic side; sequence DIFYVIRNKLNQNFSSSKETGAFYGREFKTAKS. A helical transmembrane segment spans residues 232–255; that stretch reads LFLVLFLFAFSWLPLSIINCITYF. The Extracellular portion of the chain corresponds to 256–261; it reads HGEVPQ. A helical transmembrane segment spans residues 262–284; sequence IILYLGILLSHANSMMNPIVYAY. Over 285–314 the chain is Cytoplasmic; the sequence is KIKKFKETYLLIFKTYMICQSSDSLDSSTE. Cys303 carries S-palmitoyl cysteine lipidation.

This sequence belongs to the G-protein coupled receptor 1 family.

It localises to the cell membrane. Receptor for adenosine. The activity of this receptor is mediated by G proteins which inhibits adenylyl cyclase. The polypeptide is Adenosine receptor A3 (ADORA3) (Canis lupus familiaris (Dog)).